The sequence spans 295 residues: MHYSHFYFIINNTNMTINAIPKLFATKNSISLSIVIFMYLLILVANVKSDSSFNFPNFQPEALKKLGFANDATLKNGVIQLTKKDAYGDPLKHSAGQFGLLKPIRLFDQTTGKVASFVTEFTFSVNSNGRQDHGDGFAFFMASPKFKIPNKNKSEGGFLGMFTRETALYTKEIVLVEFDSFANEWDPNPSSNLGIGSHLGIDVNSIKSVANALWLNDFDDITVGKARIEYDSSDKNLKVLVTYSEKGAFNGDSSLVYNIDLTTFLPEMIEIGFSASTGDLVETHDILSWSFTSNM.

Over 1–22 (MHYSHFYFIINNTNMTINAIPK) the chain is Cytoplasmic. Residues 23 to 45 (LFATKNSISLSIVIFMYLLILVA) form a helical membrane-spanning segment. Over 46–295 (NVKSDSSFNF…ILSWSFTSNM (250 aa)) the chain is Extracellular. A glycan (N-linked (GlcNAc...) asparagine) is linked at Asn-152.

This sequence belongs to the leguminous lectin family.

The protein resides in the membrane. In terms of biological role, may be involved in arbuscular mycorrhizal (AM) symbiosis with AM fungi. This Medicago truncatula (Barrel medic) protein is Lectin 11.